Consider the following 383-residue polypeptide: Protein delta homolog 2 (383 aa).

An N-terminal signal peptide occupies residues 1 to 26 (MPSGCRCLHLVCLLCILAAPVKPVRA). EGF-like domains follow at residues 27–58 (DDCS…LHCE), 62–89 (RMPG…KFCD), 91–129 (DEHV…RDCE), and 131–172 (KEGP…AHCE). Residues 27–306 (DDCSSHCDLA…RQEAGLGKSS (280 aa)) are Extracellular-facing. 17 disulfide bridges follow: Cys29/Cys40, Cys33/Cys46, Cys48/Cys57, Cys66/Cys71, Cys79/Cys88, Cys95/Cys107, Cys101/Cys117, Cys119/Cys128, Cys135/Cys148, Cys142/Cys160, Cys162/Cys171, Cys178/Cys189, Cys183/Cys198, Cys200/Cys209, Cys216/Cys227, Cys221/Cys236, and Cys238/Cys247. A glycan (N-linked (GlcNAc...) asparagine) is linked at Asn157. The region spanning 174–210 (NVDDCLMRPCANGATCLDGINRFSCLCPEGFAGRFCT) is the EGF-like 5; calcium-binding domain. Positions 212-248 (NLDDCASRPCQRGARCRDRVHDFDCLCPSGYGGKTCE) constitute an EGF-like 6; calcium-binding domain. A helical transmembrane segment spans residues 307–327 (LVAVVVFGAVTATLVLSTVLL). At 328-383 (TLRAWRRGVCPPGPCCYPAPHYAPARQDQECQVSMLPAGLPLPPDLPPEPGKTTAL) the chain is on the cytoplasmic side.

It localises to the membrane. Its function is as follows. Regulates adipogenesis. The protein is Protein delta homolog 2 (DLK2) of Sus scrofa (Pig).